Consider the following 112-residue polypeptide: Cytochrome c6 (112 aa).

An N-terminal signal peptide occupies residues 1-25 (MKKRFISVCAIAIALLVSLTPAALA). C39, C42, H43, and M83 together coordinate heme c.

This sequence belongs to the cytochrome c family. PetJ subfamily. As to quaternary structure, monomer. Binds 1 heme c group covalently per subunit.

The protein localises to the cellular thylakoid lumen. Functionally, functions as an electron carrier between membrane-bound cytochrome b6-f and photosystem I in oxygenic photosynthesis. This Thermosynechococcus vestitus (strain NIES-2133 / IAM M-273 / BP-1) protein is Cytochrome c6 (petJ).